A 402-amino-acid chain; its full sequence is Phosphoglycerate kinase (402 aa).

Residues Asp-24–Asn-26, Arg-40, His-63–Arg-66, Arg-122, and Arg-155 each bind substrate. Residues Lys-206, Gly-297, Glu-328, and Gly-357–Ser-360 each bind ATP.

Belongs to the phosphoglycerate kinase family. In terms of assembly, monomer.

It is found in the cytoplasm. The catalysed reaction is (2R)-3-phosphoglycerate + ATP = (2R)-3-phospho-glyceroyl phosphate + ADP. The protein operates within carbohydrate degradation; glycolysis; pyruvate from D-glyceraldehyde 3-phosphate: step 2/5. The polypeptide is Phosphoglycerate kinase (Synechococcus elongatus (strain ATCC 33912 / PCC 7942 / FACHB-805) (Anacystis nidulans R2)).